The sequence spans 511 residues: MKKADILVLDFGSQYTQLIARRLREQGVYAEILPFNVSLADIKAKEPKGIILSGGPASVYATDAYFCDKGIFDLGLPVLGICYGMQLMAHHYKATVAPAGHKEYGKANIEVKKDSALFKNLPKKQTVWMSHSDKVENLSQGFEVLATSENSPFCVFGNEDKKFFALQFHPEVQHSEFGKNILKNFAKYACNCESVWNMGSFAKTQAEKIREEVGNDKVLCAVSGGVDSSVVAALLASAIKEQVIVVFVDNGLLRSGEKEQVEFMFKNTLGIDLISIDASEIFLSRLANVRDPEQKRKIIGNTFIEIFEEEAKKHKDVKYLAQGTLYTDIIESSVVGASKTIKSHHNVGGLPEKINLKLIEPLKEIFKDEVRALGLELGLSKEVVYRHPFPGPGLAIRIMGEVNRPSLELLRKADVILLEELKSTGWYDKTWQAFCVLLNVKSVGVMGDNRTYDNAVCIRVVDASDGMTATFSHLPYEVLENISRRIINEVEGINRVVYDISSKPPATIEWE.

The 191-residue stretch at 5–195 (DILVLDFGSQ…AKYACNCESV (191 aa)) folds into the Glutamine amidotransferase type-1 domain. Cys-82 acts as the Nucleophile in catalysis. Residues His-169 and Glu-171 contribute to the active site. In terms of domain architecture, GMPS ATP-PPase spans 196-386 (WNMGSFAKTQ…LGLSKEVVYR (191 aa)). ATP is bound at residue 223-229 (SGGVDSS).

As to quaternary structure, homodimer.

It carries out the reaction XMP + L-glutamine + ATP + H2O = GMP + L-glutamate + AMP + diphosphate + 2 H(+). It functions in the pathway purine metabolism; GMP biosynthesis; GMP from XMP (L-Gln route): step 1/1. Its function is as follows. Catalyzes the synthesis of GMP from XMP. The polypeptide is GMP synthase [glutamine-hydrolyzing] (Campylobacter jejuni subsp. doylei (strain ATCC BAA-1458 / RM4099 / 269.97)).